Reading from the N-terminus, the 660-residue chain is Translation factor GUF1 homolog, mitochondrial (660 aa).

The region spanning 62–243 is the tr-type G domain; sequence EKIRNFSIIA…TIIEKIPPPT (182 aa). Residues 71–78, 136–140, and 190–193 each bind GTP; these read AHIDHGKS, DTPGH, and NKID.

Belongs to the TRAFAC class translation factor GTPase superfamily. Classic translation factor GTPase family. LepA subfamily.

The protein resides in the mitochondrion inner membrane. It carries out the reaction GTP + H2O = GDP + phosphate + H(+). Its function is as follows. Promotes mitochondrial protein synthesis. May act as a fidelity factor of the translation reaction, by catalyzing a one-codon backward translocation of tRNAs on improperly translocated ribosomes. Binds to mitochondrial ribosomes in a GTP-dependent manner. The chain is Translation factor GUF1 homolog, mitochondrial from Trichoplax adhaerens (Trichoplax reptans).